We begin with the raw amino-acid sequence, 339 residues long: Phenylalanine--tRNA ligase alpha subunit (339 aa).

Mg(2+) is bound at residue E247.

The protein belongs to the class-II aminoacyl-tRNA synthetase family. Phe-tRNA synthetase alpha subunit type 1 subfamily. As to quaternary structure, tetramer of two alpha and two beta subunits. Requires Mg(2+) as cofactor.

The protein localises to the cytoplasm. It carries out the reaction tRNA(Phe) + L-phenylalanine + ATP = L-phenylalanyl-tRNA(Phe) + AMP + diphosphate + H(+). This is Phenylalanine--tRNA ligase alpha subunit (pheS) from Deinococcus radiodurans (strain ATCC 13939 / DSM 20539 / JCM 16871 / CCUG 27074 / LMG 4051 / NBRC 15346 / NCIMB 9279 / VKM B-1422 / R1).